Here is a 381-residue protein sequence, read N- to C-terminus: Succinate--CoA ligase [ADP-forming] subunit beta (381 aa).

One can recognise an ATP-grasp domain in the interval Lys-9 to Lys-236. Residues Lys-45, Gly-52–Gly-54, Glu-91, Val-94, and Glu-99 contribute to the ATP site. Residues Asn-191 and Asp-205 each contribute to the Mg(2+) site. Residues Asn-256 and Gly-313–Thr-315 contribute to the substrate site.

It belongs to the succinate/malate CoA ligase beta subunit family. As to quaternary structure, heterotetramer of two alpha and two beta subunits. The cofactor is Mg(2+).

It catalyses the reaction succinate + ATP + CoA = succinyl-CoA + ADP + phosphate. It carries out the reaction GTP + succinate + CoA = succinyl-CoA + GDP + phosphate. Its pathway is carbohydrate metabolism; tricarboxylic acid cycle; succinate from succinyl-CoA (ligase route): step 1/1. In terms of biological role, succinyl-CoA synthetase functions in the citric acid cycle (TCA), coupling the hydrolysis of succinyl-CoA to the synthesis of either ATP or GTP and thus represents the only step of substrate-level phosphorylation in the TCA. The beta subunit provides nucleotide specificity of the enzyme and binds the substrate succinate, while the binding sites for coenzyme A and phosphate are found in the alpha subunit. This is Succinate--CoA ligase [ADP-forming] subunit beta from Halorubrum lacusprofundi (strain ATCC 49239 / DSM 5036 / JCM 8891 / ACAM 34).